A 625-amino-acid chain; its full sequence is Chromatin structure-remodeling complex subunit RSC4 (625 aa).

The disordered stretch occupies residues 1–35; it reads MVVKKRKLATEAGGSDERPKYLPGKHPKNQEKTPH. Bromo domains lie at 53–158 and 181–292; these read WHIP…VLKA and KLVD…IQKE. Phosphoserine occurs at positions 199 and 545. Polar residues predominate over residues 536–552; it reads RTSNVNSNLSQPQQQEN. The tract at residues 536 to 555 is disordered; the sequence is RTSNVNSNLSQPQQQENDVI.

Component of the two forms of the RSC complex composed of at least either RSC1 or RSC2, and ARP7, ARP9, LDB7, NPL6, RSC3, RSC30, RSC4, RSC58, RSC6, RSC8, RSC9, SFH1, STH1, HTL1 and probably RTT102. The complexes interact with histone and histone variant components of centromeric chromatin.

Its subcellular location is the nucleus. Its function is as follows. Component of the chromatin structure remodeling complex (RSC), which is involved in transcription regulation and nucleosome positioning. RSC is responsible for the transfer of a histone octamer from a nucleosome core particle to naked DNA. The reaction requires ATP and involves an activated RSC-nucleosome intermediate. Remodeling reaction also involves DNA translocation, DNA twist and conformational change. As a reconfigurer of centromeric and flanking nucleosomes, RSC complex is required both for proper kinetochore function in chromosome segregation and, via a PKC1-dependent signaling pathway, for organization of the cellular cytoskeleton. In Saccharomyces cerevisiae (strain ATCC 204508 / S288c) (Baker's yeast), this protein is Chromatin structure-remodeling complex subunit RSC4 (RSC4).